The chain runs to 75 residues: Small integral membrane protein 7 (75 aa).

A signal peptide spans Met1–Ala17. Residues Val18 to Tyr53 lie on the Extracellular side of the membrane. Residues Phe54 to Gly74 form a helical membrane-spanning segment. Residue Ser75 is a topological domain, cytoplasmic.

It belongs to the SMIM7 family.

Its subcellular location is the membrane. This chain is Small integral membrane protein 7 (SMIM7), found in Homo sapiens (Human).